The following is a 129-amino-acid chain: Small ribosomal subunit protein uS9 (129 aa).

Belongs to the universal ribosomal protein uS9 family.

The sequence is that of Small ribosomal subunit protein uS9 from Chlorobium chlorochromatii (strain CaD3).